The primary structure comprises 525 residues: GMP synthase [glutamine-hydrolyzing] (525 aa).

Residues 8-207 enclose the Glutamine amidotransferase type-1 domain; the sequence is KILILDFGSQ…ALDICQCDAN (200 aa). Residue cysteine 85 is the Nucleophile of the active site. Residues histidine 181 and glutamate 183 contribute to the active site. One can recognise a GMPS ATP-PPase domain in the interval 208–400; that stretch reads WKPASIIEDA…LGLPYDMLYR (193 aa). ATP is bound at residue 235 to 241; sequence SGGVDSS.

As to quaternary structure, homodimer.

The catalysed reaction is XMP + L-glutamine + ATP + H2O = GMP + L-glutamate + AMP + diphosphate + 2 H(+). It participates in purine metabolism; GMP biosynthesis; GMP from XMP (L-Gln route): step 1/1. In terms of biological role, catalyzes the synthesis of GMP from XMP. This Shewanella woodyi (strain ATCC 51908 / MS32) protein is GMP synthase [glutamine-hydrolyzing].